Consider the following 63-residue polypeptide: Large ribosomal subunit protein eL37 (63 aa).

Residues Cys-20, Cys-23, Cys-35, and Cys-38 each contribute to the Zn(2+) site. The C4-type zinc finger occupies Cys-20–Cys-38.

It belongs to the eukaryotic ribosomal protein eL37 family. Requires Zn(2+) as cofactor.

Binds to the 23S rRNA. The chain is Large ribosomal subunit protein eL37 from Thermococcus gammatolerans (strain DSM 15229 / JCM 11827 / EJ3).